The sequence spans 366 residues: MVLHLLLFLLLTPQGGHSCQGLELARELVLAKVRALFLDALGPPAVTREGGDPGVRRLPRRHALGGFTHRGSEPEEEEDVSQAILFPATDASCEDKSAARGLAQEAEEGLFRYMFRPSQHTRSRQVTSAQLWFHTGLDRQGTAASNSSEPLLGLLALSPGGPVAVPMSLGHAPPHWAVLHLATSALSLLTHPVLVLLLRCPLCTCSARPEATPFLVAHTRTRPPSGGERARRSTPLMSWPWSPSALRLLQRPPEEPAAHANCHRVALNISFQELGWERWIVYPPSFIFHYCHGGCGLHIPPNLSLPVPGAPPTPAQPYSLLPGAQPCCAALPGTMRPLHVRTTSDGGYSFKYETVPNLLTQHCACI.

The N-terminal stretch at 1–18 (MVLHLLLFLLLTPQGGHS) is a signal peptide. Residues 19–61 (CQGLELARELVLAKVRALFLDALGPPAVTREGGDPGVRRLPRR) constitute a propeptide that is removed on maturation. A propeptide spans 62–232 (HALGGFTHRG…PPSGGERARR (171 aa)) (inhibin alpha N-terminal region). N-linked (GlcNAc...) asparagine glycans are attached at residues asparagine 146 and asparagine 268. Disulfide bonds link cysteine 262/cysteine 328, cysteine 291/cysteine 363, and cysteine 295/cysteine 365. Residue asparagine 302 is glycosylated (N-linked (GlcNAc...) asparagine; partial).

Belongs to the TGF-beta family. Dimeric, linked by one or more disulfide bonds. Activin B is a dimer of alpha and beta-B. Inhibin A is a dimer of alpha and beta-A. Inhibin B is a dimer of alpha and beta-B. Interacts with TGFBR3L; this interaction regulates female fertility. Proteolytic processing yields a number of bioactive forms. The 20/23 kDa forms consist solely of the mature alpha chain, the 26/29 kDa forms consist of the most N-terminal propeptide linked through a disulfide bond to the mature alpha chain, the 50/53 kDa forms encompass the entire proprotein. Each type can be furthermore either mono- or diglycosylated, causing the mass difference. In terms of tissue distribution, originally found in ovary (granulosa cells) and testis (Sertoli cells), but widely distributed in many tissues including brain and placenta. In adrenal cortex expression is limited to the zona reticularis and the innermost zona fasciculata in the normal gland, extending centripetally into the zona fasciculata in hyperplasia. Also found in adrenocortical tumors. Also expressed in prostate epithelium of benign prostatic hyperplasia, in regions of basal cell hyperplasia and in nonmalignant regions of high grade prostate cancer. Only circulating inhibin B is found in male, whereas circulating inhibins A and B are found in female.

The protein localises to the secreted. In terms of biological role, inhibins and activins inhibit and activate, respectively, the secretion of follitropin by the pituitary gland. Inhibins/activins are involved in regulating a number of diverse functions such as hypothalamic and pituitary hormone secretion, gonadal hormone secretion, germ cell development and maturation, erythroid differentiation, insulin secretion, nerve cell survival, embryonic axial development or bone growth, depending on their subunit composition. Inhibins appear to oppose the functions of activins. Functionally, inhibin A is a dimer of alpha/INHA and beta-A/INHBA that functions as a feedback regulator in the hypothalamic-pituitary-gonadal (HPG) axis. Inhibits the secretion of FSH from the anterior pituitary gland by acting on pituitary gonadotrope cells. Antagonizes activin A by binding to the proteoglycan, betaglycan, and forming a stable complex with and, thereby, sequestering type II activin receptors while excluding type I receptor. Its function is as follows. Inhibin B is a dimer of alpha and beta-B that plays a crucial role in the regulation of the reproductive system by inhibiting the secretion of follicle-stimulating hormone (FSH) from the anterior pituitary gland. Thereby, maintains reproductive homeostasis in both males and females. Acts as a more potent suppressor of FSH release than inhibin A. Functions as competitive receptor antagonist binding activin type II receptors with high affinity in the presence of the TGF-beta type III coreceptor/TGFBR3L. This is Inhibin alpha chain (INHA) from Homo sapiens (Human).